Reading from the N-terminus, the 250-residue chain is Ubiquinone/menaquinone biosynthesis C-methyltransferase UbiE (250 aa).

Residues threonine 73, aspartate 94, 122-123, and serine 139 each bind S-adenosyl-L-methionine; that span reads NA.

The protein belongs to the class I-like SAM-binding methyltransferase superfamily. MenG/UbiE family.

The enzyme catalyses a 2-demethylmenaquinol + S-adenosyl-L-methionine = a menaquinol + S-adenosyl-L-homocysteine + H(+). It catalyses the reaction a 2-methoxy-6-(all-trans-polyprenyl)benzene-1,4-diol + S-adenosyl-L-methionine = a 5-methoxy-2-methyl-3-(all-trans-polyprenyl)benzene-1,4-diol + S-adenosyl-L-homocysteine + H(+). The protein operates within quinol/quinone metabolism; menaquinone biosynthesis; menaquinol from 1,4-dihydroxy-2-naphthoate: step 2/2. It functions in the pathway cofactor biosynthesis; ubiquinone biosynthesis. Its function is as follows. Methyltransferase required for the conversion of demethylmenaquinol (DMKH2) to menaquinol (MKH2) and the conversion of 2-polyprenyl-6-methoxy-1,4-benzoquinol (DDMQH2) to 2-polyprenyl-3-methyl-6-methoxy-1,4-benzoquinol (DMQH2). The sequence is that of Ubiquinone/menaquinone biosynthesis C-methyltransferase UbiE from Francisella tularensis subsp. tularensis (strain FSC 198).